Consider the following 130-residue polypeptide: Protein AUXIN-REGULATED GENE INVOLVED IN ORGAN SIZE (130 aa).

The interval 65-116 (FSLESLFLLVGLTASLLILPLVLPPLPPPPFMLLLVPIGIMVLLVVLAFMPS) is organ Size Related (OSR) domain. 2 consecutive transmembrane segments (helical) span residues 70 to 90 (LFLL…LPPL) and 94 to 114 (PFML…LAFM).

This sequence belongs to the plant organ size related (OSR) protein family. In terms of tissue distribution, mostly expressed in flowers, inflorescence stems, leaf primordia and young leaves, and, to a lower extent, in siliques, cotyledon vascular bundles, roots (pericycle and root tips) and mature leaves.

The protein resides in the membrane. The protein localises to the nucleus. Its subcellular location is the cytoplasm. It localises to the endoplasmic reticulum. Functionally, promotes cell proliferation-dependent organ growth. Takes part in the AXR1-dependent auxin signaling pathway that requires ANT during organogenesis. The polypeptide is Protein AUXIN-REGULATED GENE INVOLVED IN ORGAN SIZE (ARGOS) (Arabidopsis thaliana (Mouse-ear cress)).